A 571-amino-acid chain; its full sequence is ATP-dependent RNA helicase RhlB (571 aa).

The Q motif signature appears at 9–37 (VTFSSFDLHPALIAGLESAGFTRCTPIQA). The Helicase ATP-binding domain maps to 40-220 (LPVALPGGDV…YEHMNEPEKL (181 aa)). 53 to 60 (AQTGTGKT) is a binding site for ATP. Positions 166 to 169 (DEAD) match the DEAD box motif. The region spanning 231–393 (RVRQRIYFPS…PVTSELLTPL (163 aa)) is the Helicase C-terminal domain. Residues 391–558 (TPLPRAPRVP…KPSGSPSLLS (168 aa)) are disordered. Residues 402 to 411 (EGEEADDDAG) are compositionally biased toward acidic residues. Positions 419-432 (REAREQRAAEEQRR) are enriched in basic and acidic residues. The span at 435-448 (GRGGPGGSRSGSGG) shows a compositional bias: gly residues. A compositionally biased stretch (basic and acidic residues) spans 449 to 460 (GRRDGAGADGKP). The span at 483–497 (VVAAVAAQAPSAGVA) shows a compositional bias: low complexity. Residues 503–512 (PRKRRRRRNG) show a composition bias toward basic residues. Over residues 539-558 (VVAKPVRAAAKPSGSPSLLS) the composition is skewed to low complexity.

Belongs to the DEAD box helicase family. RhlB subfamily. As to quaternary structure, component of the RNA degradosome, which is a multiprotein complex involved in RNA processing and mRNA degradation.

It localises to the cytoplasm. It catalyses the reaction ATP + H2O = ADP + phosphate + H(+). DEAD-box RNA helicase involved in RNA degradation. Has RNA-dependent ATPase activity and unwinds double-stranded RNA. The polypeptide is ATP-dependent RNA helicase RhlB (Xanthomonas axonopodis pv. citri (strain 306)).